A 116-amino-acid chain; its full sequence is Large ribosomal subunit protein bL20 (116 aa).

It belongs to the bacterial ribosomal protein bL20 family.

Binds directly to 23S ribosomal RNA and is necessary for the in vitro assembly process of the 50S ribosomal subunit. It is not involved in the protein synthesizing functions of that subunit. This chain is Large ribosomal subunit protein bL20, found in Bacteroides fragilis (strain ATCC 25285 / DSM 2151 / CCUG 4856 / JCM 11019 / LMG 10263 / NCTC 9343 / Onslow / VPI 2553 / EN-2).